The following is a 216-amino-acid chain: L-fuculose phosphate aldolase (216 aa).

Substrate contacts are provided by residues 28-29 (GN), 43-44 (TG), and 71-72 (SS). Glu73 serves as the catalytic Proton donor/acceptor. Zn(2+) contacts are provided by Glu73, His92, His94, and His155.

The protein belongs to the aldolase class II family. AraD/FucA subfamily. In terms of assembly, homotetramer. Zn(2+) is required as a cofactor.

It carries out the reaction L-fuculose 1-phosphate = (S)-lactaldehyde + dihydroxyacetone phosphate. The protein operates within carbohydrate degradation; L-fucose degradation; L-lactaldehyde and glycerone phosphate from L-fucose: step 3/3. Its function is as follows. Involved in the degradation of L-fucose and D-arabinose. Catalyzes the reversible cleavage of L-fuculose 1-phosphate (Fuc1P) to yield dihydroxyacetone phosphate (DHAP) and L-lactaldehyde. In Haemophilus influenzae (strain ATCC 51907 / DSM 11121 / KW20 / Rd), this protein is L-fuculose phosphate aldolase.